A 239-amino-acid polypeptide reads, in one-letter code: Ribonuclease PH (239 aa).

Residues arginine 86 and 124-126 (GTR) contribute to the phosphate site.

The protein belongs to the RNase PH family. As to quaternary structure, homohexameric ring arranged as a trimer of dimers.

It catalyses the reaction tRNA(n+1) + phosphate = tRNA(n) + a ribonucleoside 5'-diphosphate. Functionally, phosphorolytic 3'-5' exoribonuclease that plays an important role in tRNA 3'-end maturation. Removes nucleotide residues following the 3'-CCA terminus of tRNAs; can also add nucleotides to the ends of RNA molecules by using nucleoside diphosphates as substrates, but this may not be physiologically important. Probably plays a role in initiation of 16S rRNA degradation (leading to ribosome degradation) during starvation. The polypeptide is Ribonuclease PH (Cupriavidus taiwanensis (strain DSM 17343 / BCRC 17206 / CCUG 44338 / CIP 107171 / LMG 19424 / R1) (Ralstonia taiwanensis (strain LMG 19424))).